Consider the following 73-residue polypeptide: UPF0352 protein APJL_0577 (73 aa).

This sequence belongs to the UPF0352 family.

In Actinobacillus pleuropneumoniae serotype 3 (strain JL03), this protein is UPF0352 protein APJL_0577.